The primary structure comprises 613 residues: Chaperone protein DnaK (613 aa).

The disordered stretch occupies residues 579-613 (MYQSASSTTQTGSGNQNSSKQENDKTVDAEYKEKS). Low complexity predominate over residues 581-597 (QSASSTTQTGSGNQNSS). A compositionally biased stretch (basic and acidic residues) spans 599–613 (QENDKTVDAEYKEKS).

It belongs to the heat shock protein 70 family.

Its function is as follows. Acts as a chaperone. The chain is Chaperone protein DnaK from Thermoplasma volcanium (strain ATCC 51530 / DSM 4299 / JCM 9571 / NBRC 15438 / GSS1).